We begin with the raw amino-acid sequence, 95 residues long: MNEVVNSGVMNIASLVVSVVVLLIGLILWFFINRASSRTNEQIELLEALLDQQKRQNALLRRLCEANEPEKADKKTIESQKSVEDEDIIRLVAER.

Residues 12–32 (IASLVVSVVVLLIGLILWFFI) traverse the membrane as a helical segment.

The protein resides in the cell membrane. This is an uncharacterized protein from Escherichia coli O157:H7.